The sequence spans 327 residues: Urease accessory protein UreD (327 aa).

Belongs to the UreD family. UreD, UreF and UreG form a complex that acts as a GTP-hydrolysis-dependent molecular chaperone, activating the urease apoprotein by helping to assemble the nickel containing metallocenter of UreC. The UreE protein probably delivers the nickel.

Its subcellular location is the cytoplasm. Required for maturation of urease via the functional incorporation of the urease nickel metallocenter. The protein is Urease accessory protein UreD of Yersinia enterocolitica serotype O:8 / biotype 1B (strain NCTC 13174 / 8081).